The following is a 1119-amino-acid chain: Protein translocase subunit SecA (1119 aa).

Residues Q177, 195 to 199 (GEGKT), and D692 each bind ATP. The interval 1025-1081 (APSIHEARQTKSKEKVETRKEEIPNMDERAAQSRAAGNTQRQQPEVTETIVRDRPKI) is disordered. Positions 1029-1055 (HEARQTKSKEKVETRKEEIPNMDERAA) are enriched in basic and acidic residues. The span at 1059–1070 (AAGNTQRQQPEV) shows a compositional bias: polar residues.

The protein belongs to the SecA family. As to quaternary structure, monomer and homodimer. Part of the essential Sec protein translocation apparatus which comprises SecA, SecYEG and auxiliary proteins SecDF. Other proteins may also be involved.

The protein localises to the cell inner membrane. Its subcellular location is the cytoplasm. The enzyme catalyses ATP + H2O + cellular proteinSide 1 = ADP + phosphate + cellular proteinSide 2.. Its function is as follows. Part of the Sec protein translocase complex. Interacts with the SecYEG preprotein conducting channel. Has a central role in coupling the hydrolysis of ATP to the transfer of proteins into and across the cell membrane, serving as an ATP-driven molecular motor driving the stepwise translocation of polypeptide chains across the membrane. The sequence is that of Protein translocase subunit SecA from Christiangramia forsetii (strain DSM 17595 / CGMCC 1.15422 / KT0803) (Gramella forsetii).